The primary structure comprises 463 residues: V-type proton ATPase subunit S1 (463 aa).

The signal sequence occupies residues 1-32 (MMAATVVSRIRTGTRWAPVLWLLLSLVAVAAA). A propeptide spanning residues 33–225 (VAAEQQVPLV…TAVRPSRVAR (193 aa)) is cleaved from the precursor. Topologically, residues 33–412 (VAAEQQVPLV…EQFSYASDCA (380 aa)) are lumenal. 8 N-linked (GlcNAc...) asparagine glycosylation sites follow: N164, N255, N267, N290, N297, N344, N351, and N399. Residues 413-433 (GFFSPGIWMGLLTTLFMLFIF) traverse the membrane as a helical segment. At 434–463 (TYGLHMILSLKTMDRFDDRKGPTITLTQIV) the chain is on the cytoplasmic side.

It belongs to the vacuolar ATPase subunit S1 family. In terms of assembly, accessory component of the multisubunit proton-transporting vacuolar (V)-ATPase protein pump. Interacts (via N-terminus) with ATP6AP2 (via N-terminus). Interacts with RNASEK. Interacts with TMEM106B (via C-terminus). Post-translationally, N-glycosylated. Expressed in brain (at protein level).

Its subcellular location is the endoplasmic reticulum membrane. It is found in the endoplasmic reticulum-Golgi intermediate compartment membrane. It localises to the cytoplasmic vesicle. The protein resides in the secretory vesicle. The protein localises to the synaptic vesicle membrane. Its subcellular location is the clathrin-coated vesicle membrane. Its function is as follows. Accessory subunit of the proton-transporting vacuolar (V)-ATPase protein pump, which is required for luminal acidification of secretory vesicles. Guides the V-type ATPase into specialized subcellular compartments, such as neuroendocrine regulated secretory vesicles or the ruffled border of the osteoclast, thereby regulating its activity. Involved in membrane trafficking and Ca(2+)-dependent membrane fusion. May play a role in the assembly of the V-type ATPase complex. In aerobic conditions, involved in intracellular iron homeostasis, thus triggering the activity of Fe(2+) prolyl hydroxylase (PHD) enzymes, and leading to HIF1A hydroxylation and subsequent proteasomal degradation. In islets of Langerhans cells, may regulate the acidification of dense-core secretory granules. This Rattus norvegicus (Rat) protein is V-type proton ATPase subunit S1 (Atp6ap1).